Consider the following 549-residue polypeptide: Glucose-6-phosphate isomerase (549 aa).

The active-site Proton donor is the E355. Catalysis depends on residues H387 and K515.

The protein belongs to the GPI family.

The protein resides in the cytoplasm. It catalyses the reaction alpha-D-glucose 6-phosphate = beta-D-fructose 6-phosphate. It functions in the pathway carbohydrate biosynthesis; gluconeogenesis. The protein operates within carbohydrate degradation; glycolysis; D-glyceraldehyde 3-phosphate and glycerone phosphate from D-glucose: step 2/4. Functionally, catalyzes the reversible isomerization of glucose-6-phosphate to fructose-6-phosphate. This is Glucose-6-phosphate isomerase from Haemophilus influenzae (strain PittGG).